A 360-amino-acid chain; its full sequence is MANTVHLSSSSLFIQTRGRKYNSILSFNNLQKRTVLSLSCALTSQGGKDMIPPKGKSNDRNFAFDFKSYMIRKAESVSMALNVSVPPQDPLAIQEAVRYSLLAGGKRVRPLLCIAACELVGGDEATAMSAACAVEMIHTSSLIHDDLPCMDDADLRRGKPTNHKVFGEHMAVLAGDALLALAFEHMTVVSSGLVAPERMIRSVTELAKAIGTKGLVAGQVSDLCSQGLNPYDVGLERLEFIHLHKTAALLEAAAVLGAIIGGGTEEEIQKLRKYGRCIGLLFQVVDDIIDVTESTEELGKTAGKDVMARKLTYPRLIGLERSREVAEKLRREAAEQLLGFDSNKVAPLVALASYIACRHN.

A chloroplast-targeting transit peptide spans 1 to 39; the sequence is MANTVHLSSSSLFIQTRGRKYNSILSFNNLQKRTVLSLS. The isopentenyl diphosphate site is built by Lys106, Arg109, and His138. The Mg(2+) site is built by Asp145 and Asp151. Arg156 is a dimethylallyl diphosphate binding site. Position 157 (Arg157) interacts with isopentenyl diphosphate. Residues Lys245, Thr246, Gln283, Lys300, and Lys310 each coordinate dimethylallyl diphosphate.

Belongs to the FPP/GGPP synthase family. Monomer. Requires Mg(2+) as cofactor.

Its subcellular location is the plastid. The protein resides in the chloroplast. It carries out the reaction isopentenyl diphosphate + dimethylallyl diphosphate = (2E)-geranyl diphosphate + diphosphate. The catalysed reaction is isopentenyl diphosphate + (2E)-geranyl diphosphate = (2E,6E)-farnesyl diphosphate + diphosphate. It catalyses the reaction isopentenyl diphosphate + (2E,6E)-farnesyl diphosphate = (2E,6E,10E)-geranylgeranyl diphosphate + diphosphate. It functions in the pathway isoprenoid biosynthesis; farnesyl diphosphate biosynthesis; farnesyl diphosphate from geranyl diphosphate and isopentenyl diphosphate: step 1/1. The protein operates within isoprenoid biosynthesis; geranyl diphosphate biosynthesis; geranyl diphosphate from dimethylallyl diphosphate and isopentenyl diphosphate: step 1/1. It participates in isoprenoid biosynthesis; geranylgeranyl diphosphate biosynthesis; geranylgeranyl diphosphate from farnesyl diphosphate and isopentenyl diphosphate: step 1/1. In terms of biological role, catalyzes the trans-addition of the three molecules of IPP onto DMAPP to form geranylgeranyl pyrophosphate. The polypeptide is Geranylgeranyl pyrophosphate synthase 12, chloroplastic (Arabidopsis thaliana (Mouse-ear cress)).